The primary structure comprises 342 residues: Mitochondrial fission factor (342 aa).

Over 1 to 322 (MSKGTSSDTS…ENKERAKREM (322 aa)) the chain is Cytoplasmic. Threonine 115 is modified (phosphothreonine). Alanine 146 carries the phosphoserine modification. A Phosphothreonine modification is found at arginine 149. A phosphoserine mark is found at lysine 151, serine 155, serine 157, and serine 172. Threonine 200 is modified (phosphothreonine). A phosphoserine mark is found at serine 202, serine 229, serine 233, and serine 295. Residues 291-322 (VDAASLRRQIIKLNRRLQLLEEENKERAKREM) are a coiled coil. A helical; Anchor for type IV membrane protein transmembrane segment spans residues 323–340 (VMYSITVAFWLLNSWLWF). Residues 341–342 (RR) lie on the Mitochondrial intermembrane side of the membrane.

This sequence belongs to the Tango11 family. In terms of assembly, homodimer. Interacts with DNM1L. Interacts with C11orf65/MFI; the interaction inhibits MFF interaction with DNM1L. In terms of tissue distribution, highly expressed in heart, kidney, liver, brain, muscle, and stomach.

Its subcellular location is the mitochondrion outer membrane. The protein localises to the peroxisome. It is found in the cytoplasmic vesicle. The protein resides in the secretory vesicle. It localises to the synaptic vesicle. Functionally, plays a role in mitochondrial and peroxisomal fission. Promotes the recruitment and association of the fission mediator dynamin-related protein 1 (DNM1L) to the mitochondrial surface. May be involved in regulation of synaptic vesicle membrane dynamics by recruitment of DNM1L to clathrin-containing vesicles. This is Mitochondrial fission factor (MFF) from Homo sapiens (Human).